Here is a 180-residue protein sequence, read N- to C-terminus: Large ribosomal subunit protein uL5 (180 aa).

Belongs to the universal ribosomal protein uL5 family. In terms of assembly, part of the 50S ribosomal subunit; part of the 5S rRNA/L5/L18/L25 subcomplex. Contacts the 5S rRNA and the P site tRNA. Forms a bridge to the 30S subunit in the 70S ribosome.

This is one of the proteins that bind and probably mediate the attachment of the 5S RNA into the large ribosomal subunit, where it forms part of the central protuberance. In the 70S ribosome it contacts protein S13 of the 30S subunit (bridge B1b), connecting the 2 subunits; this bridge is implicated in subunit movement. Contacts the P site tRNA; the 5S rRNA and some of its associated proteins might help stabilize positioning of ribosome-bound tRNAs. The protein is Large ribosomal subunit protein uL5 of Clostridium tetani (strain Massachusetts / E88).